Here is a 531-residue protein sequence, read N- to C-terminus: MPSDKDIKSPAQPKKEEEIPKSILTRISSPPPILNQPDANIIHHPQPQVPQSSLNIPGIKLSPQISTSLENREIVMAGGAYLKERMESPDSLNHKPTLLQPDKSESIPSIDYTLNPPKESQHHKSPSVHAHFYVEETLRPVRNRSRSGSNSNNNLTPITSPQHSEPSSILNKDAIKSQESLRATTNSISSAAASNQSTPRSIISGGGGGGGGANTATSSNSTTSNTALAAQGTTTTTTTTNSNSNTTTTKGEQNSNIDPRLPQDDGKFHVLIGVCGALSVGKVKLIVNKLLEIYTSDKISIQVILTKSSENFLLPETLNVLENVKKVRVWTDIDEWTTWKTRLDPVLHIELRRWADILLVCPLTANTLAKISLGICDNLLTNVIRAWNSSYPILLAPAMDSHSYSSSTTKRQLRLIADDMPWIEVLKPLEKVFGSYGDIGMGGMTDWNEIVNRIVMKLGGYPEDEDEDEADDSKDNIDESAIIDDDDDDDDDDDDDDDDDDDDDDDDDDDEEDPPQQQSTTDNSKDETTNL.

The segment covering 1–20 (MPSDKDIKSPAQPKKEEEIP) has biased composition (basic and acidic residues). Disordered stretches follow at residues 1 to 42 (MPSD…ANII), 88 to 127 (SPDS…KSPS), 139 to 168 (RPVR…EPSS), 180 to 261 (SLRA…DPRL), and 461 to 531 (YPED…TTNL). The segment covering 155–168 (LTPITSPQHSEPSS) has biased composition (polar residues). Residues 183 to 198 (ATTNSISSAAASNQST) are compositionally biased toward low complexity. Residues 204–213 (SGGGGGGGGA) are compositionally biased toward gly residues. Low complexity predominate over residues 214–249 (NTATSSNSTTSNTALAAQGTTTTTTTTNSNSNTTTT). Composition is skewed to acidic residues over residues 462-472 (PEDEDEDEADD) and 481-514 (AIID…EEDP).

It belongs to the HFCD (homooligomeric flavin containing Cys decarboxylase) superfamily.

Its subcellular location is the nucleus. It localises to the cytoplasm. Its function is as follows. May stimulate expression of certain genes that are periodically expressed during late G1. Also modulates the expression of the ENA1 ATPase. This Candida tropicalis (Yeast) protein is Protein SIS2 (SIS2).